A 453-amino-acid polypeptide reads, in one-letter code: uncharacterized protein (453 aa).

The protein to B.subtilis YcdB.

This is an uncharacterized protein from Bacillus subtilis (strain 168).